The following is a 90-amino-acid chain: Mitochondrial import inner membrane translocase subunit Tim8 A (90 aa).

The Twin CX3C motif signature appears at 36 to 59 (CWDKCMDKPGPKLDSRAEMCFVNC). 2 disulfide bridges follow: C36–C59 and C40–C55.

It belongs to the small Tim family. As to quaternary structure, heterohexamer; composed of 3 copies of TIMM8A and 3 copies of TIMM13, named soluble 70 kDa complex. Associates with the TIM22 complex, whose core is composed of TIMM22.

The protein resides in the mitochondrion inner membrane. Functionally, mitochondrial intermembrane chaperone that participates in the import and insertion of some multi-pass transmembrane proteins into the mitochondrial inner membrane. Also required for the transfer of beta-barrel precursors from the TOM complex to the sorting and assembly machinery (SAM complex) of the outer membrane. Acts as a chaperone-like protein that protects the hydrophobic precursors from aggregation and guide them through the mitochondrial intermembrane space. The TIMM8-TIMM13 complex mediates the import of some proteins while the predominant TIMM9-TIMM10 70 kDa complex mediates the import of much more proteins. The chain is Mitochondrial import inner membrane translocase subunit Tim8 A (timm8a) from Takifugu rubripes (Japanese pufferfish).